A 177-amino-acid polypeptide reads, in one-letter code: Large ribosomal subunit protein uL6 (177 aa).

This sequence belongs to the universal ribosomal protein uL6 family. In terms of assembly, part of the 50S ribosomal subunit.

Its function is as follows. This protein binds to the 23S rRNA, and is important in its secondary structure. It is located near the subunit interface in the base of the L7/L12 stalk, and near the tRNA binding site of the peptidyltransferase center. The sequence is that of Large ribosomal subunit protein uL6 from Parvibaculum lavamentivorans (strain DS-1 / DSM 13023 / NCIMB 13966).